The primary structure comprises 300 residues: Endonuclease III-like protein 1 (300 aa).

The transit peptide at 1–19 (MNSGVRMVTRSRSRATRIA) directs the protein to the mitochondrion. The disordered stretch occupies residues 1 to 53 (MNSGVRMVTRSRSRATRIASEGCREELAPREAAAEGRKSHRPVRHPRRTQKTH). Residues 22–37 (GCREELAPREAAAEGR) show a composition bias toward basic and acidic residues. The span at 38–51 (KSHRPVRHPRRTQK) shows a compositional bias: basic residues. The 25-residue stretch at 187–211 (RYEGDIPASVAELVALPGVGPKMAH) folds into the HhH domain. Lys208 serves as the catalytic Nucleophile; for N-glycosylase activity. Cys278, Cys285, Cys288, and Cys294 together coordinate [4Fe-4S] cluster.

This sequence belongs to the Nth/MutY family. In terms of assembly, interacts with YBX1. Interacts with ERCC5/XPG; the interaction stimulates NTHL1 activity and NTHL1 binding to its DNA substrate. Requires [4Fe-4S] cluster as cofactor. Ubiquitinated by TRIM26; leading to proteasomal degradation. In terms of tissue distribution, widely expressed.

The protein localises to the nucleus. It is found in the mitochondrion. The catalysed reaction is 2'-deoxyribonucleotide-(2'-deoxyribose 5'-phosphate)-2'-deoxyribonucleotide-DNA = a 3'-end 2'-deoxyribonucleotide-(2,3-dehydro-2,3-deoxyribose 5'-phosphate)-DNA + a 5'-end 5'-phospho-2'-deoxyribonucleoside-DNA + H(+). Bifunctional DNA N-glycosylase with associated apurinic/apyrimidinic (AP) lyase function that catalyzes the first step in base excision repair (BER), the primary repair pathway for the repair of oxidative DNA damage. The DNA N-glycosylase activity releases the damaged DNA base from DNA by cleaving the N-glycosidic bond, leaving an AP site. The AP lyase activity cleaves the phosphodiester bond 3' to the AP site by a beta-elimination. Primarily recognizes and repairs oxidative base damage of pyrimidines. The protein is Endonuclease III-like protein 1 (Nthl1) of Mus musculus (Mouse).